A 156-amino-acid chain; its full sequence is Small ribosomal subunit protein uS7c (156 aa).

It belongs to the universal ribosomal protein uS7 family. In terms of assembly, part of the 30S ribosomal subunit.

The protein resides in the plastid. The protein localises to the chloroplast. One of the primary rRNA binding proteins, it binds directly to 16S rRNA where it nucleates assembly of the head domain of the 30S subunit. This chain is Small ribosomal subunit protein uS7c (rps7), found in Stangeria eriopus (Natal grass cycad).